The chain runs to 118 residues: Small ribosomal subunit protein uS13 (118 aa).

The interval 92–118 (RKGLPVRGQRTKTNARTRKGPRKPIRK) is disordered.

Belongs to the universal ribosomal protein uS13 family. Part of the 30S ribosomal subunit. Forms a loose heterodimer with protein S19. Forms two bridges to the 50S subunit in the 70S ribosome.

In terms of biological role, located at the top of the head of the 30S subunit, it contacts several helices of the 16S rRNA. In the 70S ribosome it contacts the 23S rRNA (bridge B1a) and protein L5 of the 50S subunit (bridge B1b), connecting the 2 subunits; these bridges are implicated in subunit movement. Contacts the tRNAs in the A and P-sites. The chain is Small ribosomal subunit protein uS13 from Pseudomonas putida (strain ATCC 700007 / DSM 6899 / JCM 31910 / BCRC 17059 / LMG 24140 / F1).